Consider the following 6629-residue polypeptide: Replicase polyprotein 1ab (6629 aa).

At 1–1750 (MASSLKQGVS…VASYKTVLCK (1750 aa)) the chain is on the cytoplasmic side. A Ubiquitin-like 1 domain is found at 675-780 (KTVTFGETTV…SCHLIYRDYE (106 aa)). Residues 783-802 (DDIEEEDAEECDTDSGEAEE) form a disordered region. In terms of domain architecture, Macro spans 1003–1179 (VKPATCEKPK…YFDVTCKQKT (177 aa)). A Ubiquitin-like 2 domain is found at 1175 to 1227 (CKQKTIYLTEDGVKYRSIVLKPGDSLGQFGQVYAKNKIVFTADDVEDKEILYV). The Peptidase C16 domain occupies 1236 to 1497 (EYYGLDAQKY…SKSVKEDVSN (262 aa)). The For PL-PRO activity role is filled by Cys1274. Zn(2+) is bound by residues Cys1353, Cys1355, Cys1387, and Cys1390. Residues 1353–1390 (CNCGIKSYELRGLEACIQPVRATNLLHFKTQYSNCPTC) form a C4-type; degenerate zinc finger. Catalysis depends on for PL-PRO activity residues His1437 and Asp1448. The chain crosses the membrane as a helical span at residues 1751 to 1771 (VVLATLLIVWFVYTSNPVMFT). Residues 1751–1864 (VVLATLLIVW…KPVAGFVIIC (114 aa)) are HD1. One can recognise a 3Ecto domain in the interval 1769–1833 (MFTGIRVLDF…AYSVEQVYKD (65 aa)). The Lumenal segment spans residues 1772–1843 (GIRVLDFLFE…AASGFIFNWN (72 aa)). 2 cysteine pairs are disulfide-bonded: Cys1785–Cys1811 and Cys1802–Cys1808. A helical transmembrane segment spans residues 1844 to 1864 (WLYLVFLILFVKPVAGFVIIC). At 1865–2280 (YCVKYLVLNS…TFKCFKSYFK (416 aa)) the chain is on the cytoplasmic side. Residues 1911–2001 (YIQVHHILYC…KLKRHVKPTA (91 aa)) are Y1. The region spanning 1911-2263 (YIQVHHILYC…HTQKLLVEKK (353 aa)) is the CoV Nsp3 Y domain. The Zn(2+) site is built by His1915, Cys1920, Cys1925, Cys1928, Cys1961, His1964, Cys1968, and Cys1971. The ZF1 stretch occupies residues 1915–1928 (HHILYCKDVTCEVC). Positions 1961–1971 (CKRHNWYCRNC) are ZF2. Positions 2002-2104 (YAYHVVDEAC…ILDQALYEQL (103 aa)) are Y2. Residues 2002-2263 (YAYHVVDEAC…HTQKLLVEKK (262 aa)) are coV-Y. Positions 2105 to 2163 (VVEPVSKSVIDKVCSILSSIISVDTAALNYKAGTLRDALLSITKDEEAVDMAIFCHNHD) are Y3. The tract at residues 2164–2263 (VDYTGDGFTN…HTQKLLVEKK (100 aa)) is Y4. Residues 2281–2301 (WLLIFYILFTACCSGYYYMEV) traverse the membrane as a helical segment. The segment at 2281–2664 (WLLIFYILFT…LACCYLGFII (384 aa)) is HD2. The Lumenal portion of the chain corresponds to 2302–2559 (SKSFVHPMYD…FFTGVNPNIY (258 aa)). The helical transmembrane segment at 2560-2580 (MQLATMFLILVVVVLIFAMVI) threads the bilayer. The Cytoplasmic segment spans residues 2581 to 2611 (KFQGVFKAYATTVFITMLVWVINAFILCVHS). A helical transmembrane segment spans residues 2612–2632 (YNSVLAVILLVLYCYASLVTS). Residues 2633–2643 (RNTVIIMHCWL) lie on the Lumenal side of the membrane. A helical transmembrane segment spans residues 2644 to 2664 (VFTFGLIVPTWLACCYLGFII). Residues 2665-3096 (YMYTPLFLWC…SSFVRKATSW (432 aa)) lie on the Cytoplasmic side of the membrane. The region spanning 2684–2779 (LYDGNEFVGN…RYSIGVSRLQ (96 aa)) is the Nsp4C domain. Residues 2780–3086 (SGFKKLVSPS…FNQIGGVRLQ (307 aa)) enclose the Peptidase C30 domain. Residues His2820 and Cys2922 each act as for 3CL-PRO activity in the active site. The helical transmembrane segment at 3097–3117 (FWSRCVLACFLFVLCAIVLFT) threads the bilayer. Positions 3097-3317 (FWSRCVLACF…WLCTCYFGLY (221 aa)) are HD3. Residues 3118-3121 (AVPL) lie on the Lumenal side of the membrane. The helical transmembrane segment at 3122 to 3142 (KFYVYAAVILLMAVLFISFTV) threads the bilayer. Over 3143 to 3151 (KHVMAYMDT) the chain is Cytoplasmic. The helical transmembrane segment at 3152-3172 (FLLPTLITVIIGVCAEVPFIY) threads the bilayer. At 3173 to 3188 (NTLISQVVIFLSQWYD) the chain is on the lumenal side. Residues 3189–3209 (PVVFDTMVPWMFLPLVLYTAF) traverse the membrane as a helical segment. Topologically, residues 3210-3257 (KCVQGCYMNSFNTSLLMLYQFVKLGFVIYTSSNTLTAYTEGNWELFFE) are cytoplasmic. Residues 3258 to 3278 (LVHTTVLANVSSNSLIGLFVF) traverse the membrane as a helical segment. Residues 3279-3296 (KCAKWMLYYCNATYLNNY) are Lumenal-facing. A helical membrane pass occupies residues 3297-3317 (VLMAVMVNCIGWLCTCYFGLY). Residues 3318–6629 (WWVNKVFGLT…FTSDSFVCTM (3312 aa)) lie on the Cytoplasmic side of the membrane. One can recognise a RdRp Nsp7 cofactor domain in the interval 3380-3462 (AKLSDVKCTT…DILKRSTVLQ (83 aa)). The 210-residue stretch at 3463–3672 (SVTQEFSHIP…GHNKVDVVLQ (210 aa)) folds into the RdRp Nsp8 cofactor domain. A Nsp9 ssRNA-binding domain is found at 3673 to 3783 (NNELMPHGVK…GAISNVVVLQ (111 aa)). Residues 3785–3926 (KGHETEEVDA…CDSLRQPKSS (142 aa)) form the ExoN/MTase coactivator domain. 8 residues coordinate Zn(2+): Cys3858, Cys3861, His3867, Cys3878, Cys3904, Cys3907, Cys3915, and Cys3917. Zinc fingers lie at residues 3858–3878 (CLYC…DGRC) and 3904–3917 (CTVC…GCQC). One can recognise a NiRAN domain in the interval 3940 to 4198 (YLNRVRGSSE…APERYFEYDV (259 aa)). The 99-residue stretch at 4203 to 4301 (KSYDLLKYDY…MNQDNTMSFS (99 aa)) folds into the Nsp12 Interface domain. Residues His4232, Cys4238, Cys4243, Cys4247, and Cys4424 each coordinate Zn(2+). The 567-residue stretch at 4302 to 4868 (KMGLSQLMQF…NMYRAPTTLQ (567 aa)) folds into the Nsp12 RNA-dependent RNA polymerase domain. The interval 4304-4517 (GLSQLMQFVG…HQKILKSIVN (214 aa)) is rdRp Fingers N-ter. The segment at 4518–4556 (TRNASVVIGTTKFYGGWDNMLRNLIQGVEDPILMGWDYP) is rdRp Palm N-ter. Positions 4548 to 4710 (PILMGWDYPK…CYNNTLAKQG (163 aa)) constitute a RdRp catalytic domain. The rdRp Fingers C-ter stretch occupies residues 4557-4615 (KCDRAMPNLLRIAASLVLARKHTNCCSWSERIYRLYNECAQVLSETVLATGGIYVKPGG). Zn(2+) contacts are provided by His4578, Cys4581, and Cys4582. The rdRp Palm C-ter stretch occupies residues 4616–4751 (TSSGDATTAY…EKGPHEFCSQ (136 aa)). Residues Ser4695, Asp4696, and Asp4697 contribute to the active site. The interval 4752–4868 (HTMLVEVDGE…NMYRAPTTLQ (117 aa)) is rdRp Thumb. Positions 4869-4981 (SCGVCVVCNS…DDFNQLATTN (113 aa)) constitute a CV ZBD domain. Zn(2+)-binding residues include Cys4873, Cys4876, Cys4884, Cys4887, Cys4894, Cys4897, His4901, His4907, Cys4918, Cys4923, Cys4940, and His4943. In terms of domain architecture, (+)RNA virus helicase ATP-binding spans 5125-5305 (MVPECFVNNI…MVCVKPDIFL (181 aa)). 5150–5157 (GPPGSGKS) contributes to the ATP binding site. The region spanning 5306–5477 (AKCYRCPKEI…QGTGLFKICN (172 aa)) is the (+)RNA virus helicase C-terminal domain. In terms of domain architecture, ExoN spans 5539–5753 (MFITRDEAIR…RCLAINNAFC (215 aa)). Active-site residues include Asp5557, Glu5559, and Glu5658. Residues Cys5674, Cys5676, Cys5692, His5695, His5723, Cys5727, and His5730 each contribute to the Zn(2+) site. Active-site residues include His5734 and Asp5739. Cys5745 is a Zn(2+) binding site. In terms of domain architecture, N7-MTase spans 5762–5989 (YPHIANEDEV…NLWKSFSALQ (228 aa)). Residue 5797 to 5803 (DIGNPKG) coordinates S-adenosyl-L-methionine. Positions 5877 to 5891 (CNGGSLYVNKHAFYT) are gpppA-binding. Cys5915, Cys5935, Cys5946, and His5949 together coordinate Zn(2+). The 61-residue stretch at 5990–6050 (SIDNIAYNMY…SVAFELYAKR (61 aa)) folds into the Nsp15 N-terminal oligomerization domain. An AV-Nsp11N/CoV-Nsp15M domain is found at 6051 to 6166 (NIRTLPNNRI…VYKRVNGAFV (116 aa)). The NendoU domain occupies 6183–6324 (EPRSDIERDF…EDGSIKTCYP (142 aa)). Active-site residues include His6212, His6227, Lys6267, Lys6371, Asp6455, Lys6499, and Glu6532. Residues 6327–6626 (QSAWTCGYNM…NTSFTSDSFV (300 aa)) enclose the Nidovirus-type SAM-dependent 2'-O-MTase domain.

The protein belongs to the coronaviruses polyprotein 1ab family. Interacts with host PHB and PHB2. In terms of assembly, interacts with papain-like protease and non-structural protein 6. As to quaternary structure, monomer. Homodimer. Only the homodimer shows catalytic activity. Eight copies of nsp7 and eight copies of nsp8 assemble to form a heterohexadecamer dsRNA-encircling ring structure. In terms of assembly, eight copies of nsp7 and eight copies of nsp8 assemble to form a heterohexadecamer dsRNA-encircling ring structure. Interacts with ORF6 protein. As to quaternary structure, homodimer. Homododecamer. Interacts with proofreading exoribonuclease nsp14 and 2'-O-methyltransferase nsp16; these interactions enhance nsp14 and nsp16 enzymatic activities. In terms of assembly, interacts with host DDX1 (via C-terminus). Interacts with non-structural protein 10. As to quaternary structure, homohexamer. Interacts with non-structural protein 10. Requires Mn(2+) as cofactor. Zn(2+) is required as a cofactor. Post-translationally, specific enzymatic cleavages in vivo by its own proteases yield mature proteins. 3C-like proteinase nsp5 liberates nsps 6-16 from the polyprotein. Papain-like and 3C-like proteinases are autocatalytically processed. N-glycosylated.

The protein resides in the host endoplasmic reticulum membrane. It localises to the host cytoplasm. It is found in the host perinuclear region. The protein localises to the host endoplasmic reticulum. Its subcellular location is the host endoplasmic reticulum-Golgi intermediate compartment. It carries out the reaction Thiol-dependent hydrolysis of ester, thioester, amide, peptide and isopeptide bonds formed by the C-terminal Gly of ubiquitin (a 76-residue protein attached to proteins as an intracellular targeting signal).. The enzyme catalyses RNA(n) + a ribonucleoside 5'-triphosphate = RNA(n+1) + diphosphate. The catalysed reaction is ATP + H2O = ADP + phosphate + H(+). It catalyses the reaction uridylyl-uridylyl-ribonucleotide-RNA = a 3'-end uridylyl-2',3'-cyclophospho-uridine-RNA + a 5'-end dephospho-ribonucleoside-RNA. It carries out the reaction a 5'-end diphospho-ribonucleoside in mRNA + GTP + H(+) = a 5'-end (5'-triphosphoguanosine)-ribonucleoside in mRNA + diphosphate. The enzyme catalyses a 5'-end (N(7)-methyl 5'-triphosphoguanosine)-ribonucleoside in mRNA + S-adenosyl-L-methionine = a 5'-end (N(7)-methyl 5'-triphosphoguanosine)-(2'-O-methyl-ribonucleoside) in mRNA + S-adenosyl-L-homocysteine + H(+). In terms of biological role, multifunctional protein involved in the transcription and replication of viral RNAs. Contains the proteinases responsible for the cleavages of the polyprotein. Functionally, may play a role in the modulation of host cell survival signaling pathway by interacting with host PHB and PHB2. Indeed, these two proteins play a role in maintaining the functional integrity of the mitochondria and protecting cells from various stresses. Its function is as follows. Responsible for the cleavages located at the N-terminus of the replicase polyprotein. In addition, PL-PRO possesses a deubiquitinating/deISGylating activity and processes both 'Lys-48'- and 'Lys-63'-linked polyubiquitin chains from cellular substrates. Plays a role in host membrane rearrangement that leads to creation of cytoplasmic double-membrane vesicles (DMV) necessary for viral replication. Alone is able to induce paired membranes. Coexpression of nsp3 and nsp4 does not result in the formation of DMVs. In terms of biological role, responsible for the majority of cleavages as it cleaves the C-terminus of replicase polyprotein at 11 sites. Recognizes substrates containing the core sequence [ILMVF]-Q-|-[SGACN]. Inhibited by the substrate-analog Cbz-Val-Asn-Ser-Thr-Leu-Gln-CMK. Functionally, forms a hexadecamer with nsp8 (8 subunits of each) that may participate in viral replication by acting as a primase. Alternatively, may synthesize substantially longer products than oligonucleotide primers. Its function is as follows. Forms a hexadecamer with nsp7 (8 subunits of each) that may participate in viral replication by acting as a primase. Alternatively, may synthesize substantially longer products than oligonucleotide primers. Forms a primer, NSP9-pU, which is utilized by the polymerase for the initiation of RNA chains. Interacts with ribosome signal recognition particle RNA (SRP). Together with NSP8, suppress protein integration into the cell membrane, thereby disrupting host immune defenses. In terms of biological role, plays a pivotal role in viral transcription by stimulating both nsp14 3'-5' exoribonuclease and nsp16 2'-O-methyltransferase activities. Therefore plays an essential role in viral mRNAs cap methylation. Functionally, RNA-directed RNA polymerase that catalyzes the transcription of viral genomic and subgenomic RNAs. Acts in complex with nsp7 and nsp8 to transcribe both the minus and positive strands of genomic RNA. The kinase-like NiRAN domain of NSP12 attaches one or more nucleotides to the amino terminus of NSP9, forming a covalent RNA-protein intermediate that serves as transcription/replication primer. Subgenomic RNAs (sgRNAs) are formed by discontinuous transcription: The polymerase has the ability to pause at transcription-regulating sequences (TRS) and jump to the leader TRS, resulting in a major deletion. This creates a series of subgenomic RNAs that are replicated, transcribed and translated. In addition, Nsp12 is a subunit of the viral RNA capping enzyme that catalyzes the RNA guanylyltransferase reaction for genomic and sub-genomic RNAs. Subsequently, the NiRAN domain transfers RNA to GDP, and forms the core cap structure GpppA-RNA. Its function is as follows. Multi-functional protein with a zinc-binding domain in N-terminus displaying RNA and DNA duplex-unwinding activities with 5' to 3' polarity. Activity of helicase is dependent on magnesium. Enzyme possessing two different activities: an exoribonuclease activity acting on both ssRNA and dsRNA in a 3' to 5' direction and a N7-guanine methyltransferase activity. Acts as a proofreading exoribonuclease for RNA replication, thereby lowering The sensitivity of the virus to RNA mutagens. In terms of biological role, plays a role in viral transcription/replication and prevents the simultaneous activation of host cell dsRNA sensors, such as MDA5/IFIH1, OAS, and PKR. Acts by degrading the 5'-polyuridines generated during replication of the poly(A) region of viral genomic and subgenomic RNAs. Catalyzes a two-step reaction in which a 2'3'-cyclic phosphate (2'3'-cP) is first generated by 2'-O transesterification, which is then hydrolyzed to a 3'-phosphate (3'-P). If not degraded, poly(U) RNA would hybridize with poly(A) RNA tails and activate host dsRNA sensors. Functionally, methyltransferase that mediates mRNA cap 2'-O-ribose methylation to the 5'-cap structure of viral mRNAs. N7-methyl guanosine cap is a prerequisite for binding of nsp16. Therefore plays an essential role in viral mRNAs cap methylation which is essential to evade immune system. This Gallus gallus (Chicken) protein is Replicase polyprotein 1ab (rep).